The sequence spans 112 residues: Protein new-glue 2 (112 aa).

Residues 1-24 (MKITVVLVLLATFLGCVMIHESEA) form the signal peptide. Over residues 24–69 (ASTTTTSTSASATTTTSASATTTTSASATTTTSASATTTTASPSSS) the composition is skewed to low complexity. Positions 24–112 (ASTTTTSTSA…RSSRNRRSEE (89 aa)) are disordered. Repeat copies occupy residues 31 to 38 (TSASATTT), 39 to 46 (TSASATTT), 47 to 54 (TSASATTT), and 55 to 62 (TSASATTT). Residues 31–62 (TSASATTTTSASATTTTSASATTTTSASATTT) are 4 X 8 AA tandem repeats of T-S-A-S-A-T-T-T. Over residues 70–112 (SKKKTVTHYKRKVKRPKKVRKITRRRGLRSRNGRSSRNRRSEE) the composition is skewed to basic residues.

To NG-1, also to SGS-3. Salivary gland specific.

The protein resides in the secreted. In Drosophila melanogaster (Fruit fly), this protein is Protein new-glue 2 (ng2).